The chain runs to 455 residues: Bifunctional protein GlmU (455 aa).

A pyrophosphorylase region spans residues 1-226; the sequence is MSLEIVILAA…PMEVQGANDR (226 aa). UDP-N-acetyl-alpha-D-glucosamine contacts are provided by residues 8–11, K22, Q73, 78–79, 99–101, G136, E151, N166, and N224; these read LAAG, GT, and YGD. D101 contributes to the Mg(2+) binding site. Residue N224 participates in Mg(2+) binding. Residues 227–247 are linker; the sequence is KQLSELERHYQLRAGRRLMAQ. Residues 248 to 455 are N-acetyltransferase; that stretch reads GVTLRDPARF…WKRPEKIKKN (208 aa). The UDP-N-acetyl-alpha-D-glucosamine site is built by R330 and K348. The active-site Proton acceptor is the H360. Residues Y363 and N374 each contribute to the UDP-N-acetyl-alpha-D-glucosamine site. Residues A377, 383–384, S402, A420, and R437 contribute to the acetyl-CoA site; that span reads NY.

It in the N-terminal section; belongs to the N-acetylglucosamine-1-phosphate uridyltransferase family. This sequence in the C-terminal section; belongs to the transferase hexapeptide repeat family. As to quaternary structure, homotrimer. Mg(2+) is required as a cofactor.

The protein resides in the cytoplasm. It carries out the reaction alpha-D-glucosamine 1-phosphate + acetyl-CoA = N-acetyl-alpha-D-glucosamine 1-phosphate + CoA + H(+). The enzyme catalyses N-acetyl-alpha-D-glucosamine 1-phosphate + UTP + H(+) = UDP-N-acetyl-alpha-D-glucosamine + diphosphate. It participates in nucleotide-sugar biosynthesis; UDP-N-acetyl-alpha-D-glucosamine biosynthesis; N-acetyl-alpha-D-glucosamine 1-phosphate from alpha-D-glucosamine 6-phosphate (route II): step 2/2. It functions in the pathway nucleotide-sugar biosynthesis; UDP-N-acetyl-alpha-D-glucosamine biosynthesis; UDP-N-acetyl-alpha-D-glucosamine from N-acetyl-alpha-D-glucosamine 1-phosphate: step 1/1. Its pathway is bacterial outer membrane biogenesis; LPS lipid A biosynthesis. Catalyzes the last two sequential reactions in the de novo biosynthetic pathway for UDP-N-acetylglucosamine (UDP-GlcNAc). The C-terminal domain catalyzes the transfer of acetyl group from acetyl coenzyme A to glucosamine-1-phosphate (GlcN-1-P) to produce N-acetylglucosamine-1-phosphate (GlcNAc-1-P), which is converted into UDP-GlcNAc by the transfer of uridine 5-monophosphate (from uridine 5-triphosphate), a reaction catalyzed by the N-terminal domain. The sequence is that of Bifunctional protein GlmU from Pseudomonas fluorescens (strain Pf0-1).